The following is a 276-amino-acid chain: Formamidopyrimidine-DNA glycosylase (276 aa).

Proline 2 functions as the Schiff-base intermediate with DNA in the catalytic mechanism. The Proton donor role is filled by glutamate 3. Lysine 58 serves as the catalytic Proton donor; for beta-elimination activity. Positions 94, 112, and 157 each coordinate DNA. Residues 242–276 (FVYDRAGLPCRVCGTPIKQIVQGQRSTYFCPTCQR) form an FPG-type zinc finger. Arginine 266 functions as the Proton donor; for delta-elimination activity in the catalytic mechanism.

The protein belongs to the FPG family. Monomer. Zn(2+) serves as cofactor.

The catalysed reaction is Hydrolysis of DNA containing ring-opened 7-methylguanine residues, releasing 2,6-diamino-4-hydroxy-5-(N-methyl)formamidopyrimidine.. It catalyses the reaction 2'-deoxyribonucleotide-(2'-deoxyribose 5'-phosphate)-2'-deoxyribonucleotide-DNA = a 3'-end 2'-deoxyribonucleotide-(2,3-dehydro-2,3-deoxyribose 5'-phosphate)-DNA + a 5'-end 5'-phospho-2'-deoxyribonucleoside-DNA + H(+). Its function is as follows. Involved in base excision repair of DNA damaged by oxidation or by mutagenic agents. Acts as a DNA glycosylase that recognizes and removes damaged bases. Has a preference for oxidized purines, such as 7,8-dihydro-8-oxoguanine (8-oxoG). Has AP (apurinic/apyrimidinic) lyase activity and introduces nicks in the DNA strand. Cleaves the DNA backbone by beta-delta elimination to generate a single-strand break at the site of the removed base with both 3'- and 5'-phosphates. This Paraburkholderia phytofirmans (strain DSM 17436 / LMG 22146 / PsJN) (Burkholderia phytofirmans) protein is Formamidopyrimidine-DNA glycosylase.